A 932-amino-acid polypeptide reads, in one-letter code: 2-oxoglutarate dehydrogenase E1 component (932 aa).

The protein belongs to the alpha-ketoglutarate dehydrogenase family. In terms of assembly, homodimer. Part of the 2-oxoglutarate dehydrogenase (OGDH) complex composed of E1 (2-oxoglutarate dehydrogenase), E2 (dihydrolipoamide succinyltransferase) and E3 (dihydrolipoamide dehydrogenase); the complex contains multiple copies of the three enzymatic components (E1, E2 and E3). It depends on thiamine diphosphate as a cofactor.

The enzyme catalyses N(6)-[(R)-lipoyl]-L-lysyl-[protein] + 2-oxoglutarate + H(+) = N(6)-[(R)-S(8)-succinyldihydrolipoyl]-L-lysyl-[protein] + CO2. E1 component of the 2-oxoglutarate dehydrogenase (OGDH) complex which catalyzes the decarboxylation of 2-oxoglutarate, the first step in the conversion of 2-oxoglutarate to succinyl-CoA and CO(2). The protein is 2-oxoglutarate dehydrogenase E1 component of Staphylococcus aureus (strain USA300).